The following is a 182-amino-acid chain: Fatty-acid and retinol-binding protein 2 (182 aa).

A signal peptide spans 1-17; that stretch reads MIRAFLVVALASVAVFS. Coiled-coil stretches lie at residues 46-73 and 131-152; these read LKAI…EEEF and TLDS…LSDD.

It belongs to the fatty-acid and retinol-binding protein (FARBP) family.

Its subcellular location is the secreted. Functionally, probably binds lipids. This is Fatty-acid and retinol-binding protein 2 (far-2) from Caenorhabditis elegans.